Reading from the N-terminus, the 426-residue chain is Gamma-glutamyl phosphate reductase (426 aa).

It belongs to the gamma-glutamyl phosphate reductase family.

The protein resides in the cytoplasm. The enzyme catalyses L-glutamate 5-semialdehyde + phosphate + NADP(+) = L-glutamyl 5-phosphate + NADPH + H(+). The protein operates within amino-acid biosynthesis; L-proline biosynthesis; L-glutamate 5-semialdehyde from L-glutamate: step 2/2. Its function is as follows. Catalyzes the NADPH-dependent reduction of L-glutamate 5-phosphate into L-glutamate 5-semialdehyde and phosphate. The product spontaneously undergoes cyclization to form 1-pyrroline-5-carboxylate. The protein is Gamma-glutamyl phosphate reductase of Deinococcus geothermalis (strain DSM 11300 / CIP 105573 / AG-3a).